Reading from the N-terminus, the 147-residue chain is Putative pre-16S rRNA nuclease (147 aa).

The protein belongs to the YqgF nuclease family.

Its subcellular location is the cytoplasm. Functionally, could be a nuclease involved in processing of the 5'-end of pre-16S rRNA. This chain is Putative pre-16S rRNA nuclease, found in Latilactobacillus sakei subsp. sakei (strain 23K) (Lactobacillus sakei subsp. sakei).